We begin with the raw amino-acid sequence, 192 residues long: Peptidyl-tRNA hydrolase (192 aa).

Tyrosine 17 contacts tRNA. Catalysis depends on histidine 22, which acts as the Proton acceptor. Residues phenylalanine 68, asparagine 70, and asparagine 116 each coordinate tRNA.

This sequence belongs to the PTH family. In terms of assembly, monomer.

The protein resides in the cytoplasm. It catalyses the reaction an N-acyl-L-alpha-aminoacyl-tRNA + H2O = an N-acyl-L-amino acid + a tRNA + H(+). In terms of biological role, hydrolyzes ribosome-free peptidyl-tRNAs (with 1 or more amino acids incorporated), which drop off the ribosome during protein synthesis, or as a result of ribosome stalling. Catalyzes the release of premature peptidyl moieties from peptidyl-tRNA molecules trapped in stalled 50S ribosomal subunits, and thus maintains levels of free tRNAs and 50S ribosomes. The protein is Peptidyl-tRNA hydrolase of Hydrogenovibrio crunogenus (strain DSM 25203 / XCL-2) (Thiomicrospira crunogena).